Reading from the N-terminus, the 505-residue chain is Apolipoprotein N-acyltransferase (505 aa).

The next 6 membrane-spanning stretches (helical) occupy residues 26 to 46, 66 to 86, 89 to 109, 129 to 149, 161 to 181, and 186 to 206; these read FAPYQLWPIAILSPAILLILL, FATGVSWVYVSISGFGGMPLI, LFLMGMLIAYLAVYSGLFAWL, LWLITDWLRGWVMTGFPWLWL, FAPIGGVELLTLFVLISAGAL, and IHKQWLMIIIPVVLMSAGFGI. Residues 225–471 form the CN hydrolase domain; the sequence is IQGNVDQNLK…TAVLRAELTP (247 aa). Catalysis depends on Glu-264, which acts as the Proton acceptor. The active site involves Lys-330. The Nucleophile role is filled by Cys-382. The chain crosses the membrane as a helical span at residues 481–501; the sequence is FGTWPLYFWVALSLMLAWWLP.

Belongs to the CN hydrolase family. Apolipoprotein N-acyltransferase subfamily.

It is found in the cell inner membrane. The enzyme catalyses N-terminal S-1,2-diacyl-sn-glyceryl-L-cysteinyl-[lipoprotein] + a glycerophospholipid = N-acyl-S-1,2-diacyl-sn-glyceryl-L-cysteinyl-[lipoprotein] + a 2-acyl-sn-glycero-3-phospholipid + H(+). It participates in protein modification; lipoprotein biosynthesis (N-acyl transfer). Its function is as follows. Catalyzes the phospholipid dependent N-acylation of the N-terminal cysteine of apolipoprotein, the last step in lipoprotein maturation. This Vibrio parahaemolyticus serotype O3:K6 (strain RIMD 2210633) protein is Apolipoprotein N-acyltransferase.